The sequence spans 643 residues: Transmembrane 9 superfamily member 4 (643 aa).

The first 23 residues, 1-23 (MAAAMIWWPRFLLLLCLTCKGST), serve as a signal peptide directing secretion. The Extracellular segment spans residues 24-282 (FYVPGVAPIN…TMSDVQIHWF (259 aa)). The chain crosses the membrane as a helical span at residues 283–303 (SIINSVVVVFFLSGILSMIII). Topologically, residues 304-347 (RTLRKDIANYNKEDDIEDTMEESGWKLVHGDVFRPPQYPMILSS) are cytoplasmic. Position 313 is a phosphotyrosine (Tyr313). The chain crosses the membrane as a helical span at residues 348 to 368 (LLGSGIQLFCMILIVIFVAML). The Extracellular segment spans residues 369–377 (GMLSPSSRG). The chain crosses the membrane as a helical span at residues 378 to 398 (ALMTTACFLFMFMGVFGGFSA). Residues 399-417 (GRLYRTLKGHRWKKGAFCT) are Cytoplasmic-facing. A helical membrane pass occupies residues 418-438 (ATLYPGVVFGICFVLNCFIWG). The Extracellular portion of the chain corresponds to 439-450 (KHSSGAVPFPTM). The helical transmembrane segment at 451–471 (VALLCMWFGISLPLVYLGYYF) threads the bilayer. Residues 472–502 (GFRKQPYDNPVRTNQIPRQIPEQRWYMNRFV) are Cytoplasmic-facing. Residues 503–523 (GILMAGILPFGAMFIELFFIF) form a helical membrane-spanning segment. At 524–536 (SAIWENQFYYLFG) the chain is on the extracellular side. The chain crosses the membrane as a helical span at residues 537–557 (FLFLVFIILVVSCSQISIVMV). Topologically, residues 558–571 (YFQLCAEDYRWWWR) are cytoplasmic. A helical transmembrane segment spans residues 572–592 (NFLVSGGSAFYVLVYAIFYFV). Over 593–599 (NKLDIVE) the chain is Extracellular. The helical transmembrane segment at 600 to 620 (FIPSLLYFGYTTLMVLSFWLL) threads the bilayer. The Cytoplasmic portion of the chain corresponds to 621 to 643 (TGTIGFYAAYMFVRKIYAAVKID).

Belongs to the nonaspanin (TM9SF) (TC 9.A.2) family.

The protein resides in the membrane. It localises to the golgi apparatus. The protein localises to the early endosome. Its function is as follows. Associates with proteins harboring glycine-rich transmembrane domains and ensures their efficient localization to the cell surface. In Rattus norvegicus (Rat), this protein is Transmembrane 9 superfamily member 4 (Tm9sf4).